Here is a 725-residue protein sequence, read N- to C-terminus: Glyoxysomal fatty acid beta-oxidation multifunctional protein MFP-a (725 aa).

The protein in the N-terminal section; belongs to the enoyl-CoA hydratase/isomerase family. This sequence in the central section; belongs to the 3-hydroxyacyl-CoA dehydrogenase family.

The protein resides in the glyoxysome. The catalysed reaction is a (3S)-3-hydroxyacyl-CoA = a (2E)-enoyl-CoA + H2O. It carries out the reaction a 4-saturated-(3S)-3-hydroxyacyl-CoA = a (3E)-enoyl-CoA + H2O. It catalyses the reaction a (3Z)-enoyl-CoA = a 4-saturated (2E)-enoyl-CoA. The enzyme catalyses a (3E)-enoyl-CoA = a 4-saturated (2E)-enoyl-CoA. The catalysed reaction is (3S)-3-hydroxybutanoyl-CoA = (3R)-3-hydroxybutanoyl-CoA. It carries out the reaction a (3S)-3-hydroxyacyl-CoA + NAD(+) = a 3-oxoacyl-CoA + NADH + H(+). It participates in lipid metabolism; fatty acid beta-oxidation. In Cucumis sativus (Cucumber), this protein is Glyoxysomal fatty acid beta-oxidation multifunctional protein MFP-a.